Consider the following 225-residue polypeptide: uncharacterized protein (225 aa).

This is an uncharacterized protein from Arabidopsis thaliana (Mouse-ear cress).